The following is a 122-amino-acid chain: MATLSKKQQTQKRHKRLRRHLNGTNHRPRLAVFRSNNHIYAQVIDDEAQSTICSASTLDKDLREKLKASGGSCDASMAVGALLAQRALAKGIEQVVFDRGGNLYHGRVKALAKSAREAGLKF.

Residues 1 to 27 (MATLSKKQQTQKRHKRLRRHLNGTNHR) form a disordered region. A compositionally biased stretch (basic residues) spans 9–27 (QTQKRHKRLRRHLNGTNHR).

Belongs to the universal ribosomal protein uL18 family. In terms of assembly, part of the 50S ribosomal subunit; part of the 5S rRNA/L5/L18/L25 subcomplex. Contacts the 5S and 23S rRNAs.

Its function is as follows. This is one of the proteins that bind and probably mediate the attachment of the 5S RNA into the large ribosomal subunit, where it forms part of the central protuberance. The chain is Large ribosomal subunit protein uL18 from Prochlorococcus marinus (strain MIT 9211).